The following is an 83-amino-acid chain: Small ribosomal subunit protein bS16 (83 aa).

This sequence belongs to the bacterial ribosomal protein bS16 family.

The polypeptide is Small ribosomal subunit protein bS16 (Shewanella denitrificans (strain OS217 / ATCC BAA-1090 / DSM 15013)).